Here is a 291-residue protein sequence, read N- to C-terminus: Ribosomal protein L11 methyltransferase (291 aa).

4 residues coordinate S-adenosyl-L-methionine: T136, G159, D181, and N228.

It belongs to the methyltransferase superfamily. PrmA family.

Its subcellular location is the cytoplasm. It carries out the reaction L-lysyl-[protein] + 3 S-adenosyl-L-methionine = N(6),N(6),N(6)-trimethyl-L-lysyl-[protein] + 3 S-adenosyl-L-homocysteine + 3 H(+). Functionally, methylates ribosomal protein L11. This Sinorhizobium fredii (strain NBRC 101917 / NGR234) protein is Ribosomal protein L11 methyltransferase.